Consider the following 549-residue polypeptide: DDB1- and CUL4-associated factor 11 (549 aa).

Positions 1-24 (MGSRNSSSAGSGSLEPSEGLSRRG) are enriched in low complexity. The segment at 1 to 40 (MGSRNSSSAGSGSLEPSEGLSRRGAGLRRSEEEEEEDEDV) is disordered. Residues Ser-73 and Ser-75 each carry the phosphoserine modification. Basic and acidic residues predominate over residues 80 to 89 (DSAWDGRLGD). The interval 80–100 (DSAWDGRLGDRYNPPVDATPD) is disordered. 7 WD repeats span residues 170–210 (TYSQ…HKFK), 216–258 (DVGW…TALD), 263–302 (ERRF…RTLQ), 305–345 (SHED…EDDP), 353–392 (GHQD…SREG), 435–480 (GVLH…KKLT), and 481–520 (NHKA…YFQD).

In terms of assembly, interacts with DDB1 and CUL4A.

The protein operates within protein modification; protein ubiquitination. In terms of biological role, may function as a substrate receptor for CUL4-DDB1 E3 ubiquitin-protein ligase complex. This is DDB1- and CUL4-associated factor 11 (Dcaf11) from Rattus norvegicus (Rat).